We begin with the raw amino-acid sequence, 296 residues long: GTPase Era (296 aa).

An Era-type G domain is found at 3–170; it reads KSGFVTIVGR…KELMFKYIPE (168 aa). The interval 11 to 18 is G1; it reads GRPNVGKS. 11–18 contributes to the GTP binding site; sequence GRPNVGKS. The segment at 37-41 is G2; the sequence is QTTRN. Positions 58–61 are G3; sequence DTPG. Residues 58 to 62 and 120 to 123 each bind GTP; these read DTPGI and NKID. Residues 120–123 are G4; the sequence is NKID. The segment at 149-151 is G5; that stretch reads ISA. Residues 201–278 form the KH type-2 domain; the sequence is LSEEVPHGIA…YIRLWVKVKE (78 aa).

It belongs to the TRAFAC class TrmE-Era-EngA-EngB-Septin-like GTPase superfamily. Era GTPase family. As to quaternary structure, monomer.

It localises to the cytoplasm. Its subcellular location is the cell membrane. Functionally, an essential GTPase that binds both GDP and GTP, with rapid nucleotide exchange. Plays a role in 16S rRNA processing and 30S ribosomal subunit biogenesis and possibly also in cell cycle regulation and energy metabolism. The chain is GTPase Era from Clostridium botulinum (strain ATCC 19397 / Type A).